Reading from the N-terminus, the 549-residue chain is GATA-type transcription factor sreA (549 aa).

Positions 40–100 (AQAGREHPQD…TSPKSQKDTS (61 aa)) are disordered. Composition is skewed to basic and acidic residues over residues 43–72 (GREH…HEGE) and 86–97 (HHVEKTSPKSQK). The GATA-type 1 zinc-finger motif lies at 106–130 (CSNCGTKSTPLWRRSPTGAMICNAC). Residues 141–174 (RPTKRNRTQASPEAYHPQNQSVGSQPDPAVTGSE) form a disordered region. The cystein-rich region (CRR) stretch occupies residues 180 to 198 (CPGGGNCNGTGGAEGCDGC). The segment at 223-244 (GNSDAVPSPEAEAPARNSGQPE) is disordered. Residues 251 to 275 (CQNCGTTVTPLWRRDENGHPICNAC) form a GATA-type 2 zinc finger. Disordered stretches follow at residues 306-332 (RENS…PATL), 375-459 (NSGA…RLSS), and 482-535 (LGRQ…MREQ). Residues 309–331 (SPTAATHSSHGSSASPEASSPAT) are compositionally biased toward low complexity. Pro residues predominate over residues 383–396 (HHPPPPRLLEPGHP). Low complexity predominate over residues 485–497 (QQQSQPHHPQSSP). Polar residues predominate over residues 498-515 (LAPTQAASQSLPGVSNMD). A coiled-coil region spans residues 511–549 (VSNMDNHVEDRRAKLQREAEEMREQLRAKERELAELAGQ). A compositionally biased stretch (basic and acidic residues) spans 516–535 (NHVEDRRAKLQREAEEMREQ).

The protein localises to the nucleus. In terms of biological role, GATA-type transcription repressor that regulates iron- acquisition genes through specific binding GATA sequence elements of target promoters. Iron acquisition regulation is critical for survival under both iron-limiting conditions (to acquire essential iron) and iron-replete conditions (to limit iron toxicity). SreA targets include genes encoding a number of key iron-regulated factors such as those involved in siderophore biosynthesis. The polypeptide is GATA-type transcription factor sreA (Emericella nidulans (strain FGSC A4 / ATCC 38163 / CBS 112.46 / NRRL 194 / M139) (Aspergillus nidulans)).